Here is a 393-residue protein sequence, read N- to C-terminus: Prokineticin receptor 1 (393 aa).

Residues methionine 1–lysine 62 are Extracellular-facing. Asparagine 11 is a glycosylation site (N-linked (GlcNAc...) asparagine). Residues isoleucine 63–phenylalanine 83 traverse the membrane as a helical segment. The Cytoplasmic segment spans residues isoleucine 84–asparagine 98. Residues leucine 99 to glutamate 119 traverse the membrane as a helical segment. Residues methionine 120–threonine 145 are Extracellular-facing. An intrachain disulfide couples cysteine 137 to cysteine 217. A helical transmembrane segment spans residues valine 146–isoleucine 166. The Cytoplasmic portion of the chain corresponds to valine 167–alanine 179. A helical transmembrane segment spans residues alanine 180–phenylalanine 200. At threonine 201 to tyrosine 232 the chain is on the extracellular side. The chain crosses the membrane as a helical span at residues phenylalanine 233–alanine 253. Over arginine 254–threonine 282 the chain is Cytoplasmic. The chain crosses the membrane as a helical span at residues valine 283–phenylalanine 303. Topologically, residues threonine 304–threonine 322 are extracellular. Residues alanine 323 to valine 343 form a helical membrane-spanning segment. Residues threonine 344 to lysine 393 lie on the Cytoplasmic side of the membrane.

Belongs to the G-protein coupled receptor 1 family. In terms of tissue distribution, widely expressed in peripheral tissues with the highest level in the spleen and moderate levels in the adipose tissues, thymus, lung, kidney, testis, uterus and small intestine.

The protein resides in the cell membrane. Functionally, receptor for prokineticin 1. Exclusively coupled to the G(q) subclass of heteromeric G proteins. Activation leads to mobilization of calcium, stimulation of phosphoinositide turnover and activation of p44/p42 mitogen-activated protein kinase. May play a role during early pregnancy. The chain is Prokineticin receptor 1 (Prokr1) from Rattus norvegicus (Rat).